The sequence spans 1282 residues: Clustered mitochondria protein homolog (1282 aa).

The disordered stretch occupies residues Met1–Gln50. Low complexity predominate over residues Pro16 to Gln36. Acidic residues predominate over residues Glu37 to Leu47. The Clu domain maps to Asp331–Met575. Residues Glu623–Glu650 are a coiled coil. 2 stretches are compositionally biased toward basic and acidic residues: residues Glu624–Glu661 and Val668–Asp680. Disordered stretches follow at residues Glu624–Asp680 and Pro913–Val945. 3 TPR repeats span residues Ala1021–Thr1054, Val1063–Ile1096, and Ile1105–Val1138. The interval Val1257 to Ala1282 is disordered. Basic residues predominate over residues Lys1264–Ala1282.

This sequence belongs to the CLU family. In terms of assembly, may associate with the eukaryotic translation initiation factor 3 (eIF-3) complex.

The protein resides in the cytoplasm. Functionally, mRNA-binding protein involved in proper cytoplasmic distribution of mitochondria. This chain is Clustered mitochondria protein homolog, found in Neurospora crassa (strain ATCC 24698 / 74-OR23-1A / CBS 708.71 / DSM 1257 / FGSC 987).